Consider the following 212-residue polypeptide: External core antigen (212 aa).

An N-terminal signal peptide occupies residues Met1–Ala19. Positions Gly25–Leu27 are HBEAG. The tract at residues Asn165–Cys212 is disordered. The segment covering Val178–Ser205 has biased composition (basic residues). A 1; half-length repeat occupies Ser184 to Pro190. The 3 X 8 AA repeats of S-P-R-R-R-R-S-Q stretch occupies residues Ser184–Gln206. Positions Ser184–Cys212 are excised as a propeptide. 2 repeat units span residues Ser191–Gln198 and Ser199–Gln206.

The protein belongs to the orthohepadnavirus precore antigen family. In terms of assembly, homodimerizes. Phosphorylated. Post-translationally, cleaved by host furin.

Its subcellular location is the secreted. It localises to the host nucleus. Functionally, may regulate immune response to the intracellular capsid in acting as a T-cell tolerogen, by having an immunoregulatory effect which prevents destruction of infected cells by cytotoxic T-cells. This immune regulation may predispose to chronicity during perinatal infections and prevent severe liver injury during adult infections. This Hepatitis B virus genotype F2 subtype adw4q (isolate Senegal/9203) (HBV-F) protein is External core antigen.